The primary structure comprises 196 residues: Peptide deformylase (196 aa).

Fe cation-binding residues include cysteine 123 and histidine 166. The active site involves glutamate 167. Histidine 170 contributes to the Fe cation binding site.

It belongs to the polypeptide deformylase family. Requires Fe(2+) as cofactor.

The enzyme catalyses N-terminal N-formyl-L-methionyl-[peptide] + H2O = N-terminal L-methionyl-[peptide] + formate. Removes the formyl group from the N-terminal Met of newly synthesized proteins. Requires at least a dipeptide for an efficient rate of reaction. N-terminal L-methionine is a prerequisite for activity but the enzyme has broad specificity at other positions. This Lactococcus lactis subsp. lactis (strain IL1403) (Streptococcus lactis) protein is Peptide deformylase.